The sequence spans 178 residues: uncharacterized protein (178 aa).

Its function is as follows. This protein is non-essential for virus function. This is an uncharacterized protein from Sulfolobus spindle-shape virus 1 (SSV1).